We begin with the raw amino-acid sequence, 364 residues long: Aminomethyltransferase (364 aa).

Belongs to the GcvT family. The glycine cleavage system is composed of four proteins: P, T, L and H.

It catalyses the reaction N(6)-[(R)-S(8)-aminomethyldihydrolipoyl]-L-lysyl-[protein] + (6S)-5,6,7,8-tetrahydrofolate = N(6)-[(R)-dihydrolipoyl]-L-lysyl-[protein] + (6R)-5,10-methylene-5,6,7,8-tetrahydrofolate + NH4(+). In terms of biological role, the glycine cleavage system catalyzes the degradation of glycine. This is Aminomethyltransferase from Shewanella piezotolerans (strain WP3 / JCM 13877).